A 197-amino-acid chain; its full sequence is HTH-type transcriptional regulator BetI (197 aa).

Positions 8 to 68 constitute an HTH tetR-type domain; it reads PIRRQQLIQA…ATMRHLMNAL (61 aa). The H-T-H motif DNA-binding region spans 31 to 50; the sequence is SIALIARLAGVSNGIISHYF.

It functions in the pathway amine and polyamine biosynthesis; betaine biosynthesis via choline pathway [regulation]. In terms of biological role, repressor involved in the biosynthesis of the osmoprotectant glycine betaine. It represses transcription of the choline transporter BetT and the genes of BetAB involved in the synthesis of glycine betaine. The protein is HTH-type transcriptional regulator BetI of Pseudomonas savastanoi pv. phaseolicola (strain 1448A / Race 6) (Pseudomonas syringae pv. phaseolicola (strain 1448A / Race 6)).